Here is a 33-residue protein sequence, read N- to C-terminus: Brevinin-2 (33 aa).

The cysteines at positions 27 and 33 are disulfide-linked.

The protein belongs to the frog skin active peptide (FSAP) family. Brevinin subfamily. Expressed by the skin glands.

The protein localises to the secreted. In terms of biological role, shows antibacterial activity against representative Gram-negative and Gram-positive bacterial species, and a very high hemolytic activity. The chain is Brevinin-2 from Pelophylax porosus brevipodus (Nagoya Daruma pond frog).